The primary structure comprises 90 residues: Putative defensin-like protein 64 (90 aa).

A signal peptide spans 1–23 (MWGRQIVLKIFFLVLSCVIVIET). 2 disulfide bridges follow: cysteine 33–cysteine 56 and cysteine 42–cysteine 77.

Belongs to the DEFL family.

The protein localises to the secreted. The chain is Putative defensin-like protein 64 from Arabidopsis thaliana (Mouse-ear cress).